The chain runs to 141 residues: MAKKVINVVKLQIPAGAATPAPPVGPALGQAGINIVGFTKDFNARTADQKGMIIPVVITVYEDRSFEFITKTPPAPVLLKQAAKIDKASGEPNTKKVGKVTKDQVKEIAETKMKDLNAADIEAAMRMVEGTARSMGIEVED.

It belongs to the universal ribosomal protein uL11 family. In terms of assembly, part of the ribosomal stalk of the 50S ribosomal subunit. Interacts with L10 and the large rRNA to form the base of the stalk. L10 forms an elongated spine to which L12 dimers bind in a sequential fashion forming a multimeric L10(L12)X complex. Post-translationally, one or more lysine residues are methylated.

In terms of biological role, forms part of the ribosomal stalk which helps the ribosome interact with GTP-bound translation factors. The sequence is that of Large ribosomal subunit protein uL11 from Lactobacillus acidophilus (strain ATCC 700396 / NCK56 / N2 / NCFM).